Consider the following 236-residue polypeptide: Endo-1,4-beta-xylanase 3 (236 aa).

The N-terminal stretch at 1-45 (MQILTWALAALAAIPAVTAAPVETVEASSMDELVERSPNVTLVAR) is a signal peptide. 2 N-linked (GlcNAc...) asparagine glycosylation sites follow: asparagine 39 and asparagine 106. One can recognise a GH11 domain in the interval 46–236 (GTPSSTGTHN…SSGSASMTVR (191 aa)). The active-site Nucleophile is glutamate 131. The active-site Proton donor is the glutamate 223.

This sequence belongs to the glycosyl hydrolase 11 (cellulase G) family.

The protein localises to the secreted. The catalysed reaction is Endohydrolysis of (1-&gt;4)-beta-D-xylosidic linkages in xylans.. It participates in glycan degradation; xylan degradation. Endo-1,4-beta-xylanase involved in the hydrolysis of xylan, a major structural heterogeneous polysaccharide found in plant biomass representing the second most abundant polysaccharide in the biosphere, after cellulose. This chain is Endo-1,4-beta-xylanase 3 (XYL3), found in Pyricularia grisea (Crabgrass-specific blast fungus).